A 225-amino-acid chain; its full sequence is Transmembrane protein C16orf54 homolog (225 aa).

The chain crosses the membrane as a helical span at residues 34–54 (IPIMLGLASLTAFFIITTAVL). The disordered stretch occupies residues 107–149 (RAPDPPTPGGTLEGRATAPPAIPTPHPSPSSLVPQTPPEVPAQ). T113 and T117 each carry phosphothreonine. Position 195 is a phosphoserine (S195).

It localises to the membrane. The sequence is that of Transmembrane protein C16orf54 homolog from Rattus norvegicus (Rat).